A 687-amino-acid polypeptide reads, in one-letter code: Protein-glutamine gamma-glutamyltransferase 2 (687 aa).

Ala-2 is subject to N-acetylalanine. Disulfide bonds link Cys-230–Cys-370 and Cys-370–Cys-371. Catalysis depends on residues Cys-277, His-335, and Asp-358. Ca(2+) contacts are provided by Asn-398, Asp-400, Glu-437, Glu-447, and Glu-452. Residue Lys-468 is modified to N6-acetyllysine. 476–483 (RIRVGEGM) contacts GTP. Ca(2+) is bound at residue Glu-539. 580-583 (RDIY) contacts GTP. Residue Gln-633 forms an Isoglutamyl lysine isopeptide (Gln-Lys) (interchain with K-?) linkage.

The protein belongs to the transglutaminase superfamily. Transglutaminase family. In terms of assembly, monomer. Interacts with phospholipase C; promoting alpha-1 adrenergic receptor signaling. Interacts with PLCD1. It depends on Ca(2+) as a cofactor. Disulfide bond formation inactivates the calcium-dependent acyltransferase activity. Cys-370 can form disulfide bonds with both Cys-230 and Cys-371: formation of a disulfide bond between Cys-230 and Cys-370 facilitates formation of the disulfide between Cys-370 and Cys-371, which promotes inactivation of the acyltransferase activity. May also form interchain disulfids between Cys-230 and Cys-370. Ca(2+) protects against disulfide bond formation and inactivation. Post-translationally, auto-transglutaminated: Forms covalent cross-links mediated by transglutaminase between Gln-633 and the epsilon-amino group of a lysine residue of itself or HMGB1, forming homopolymers and heteropolymers, respectively. In terms of processing, S-nitrosylated, leading to inactivation of the acyltransferase activity. Highest levels are detected in the lung. Lower levels are found in the liver, spleen and heart, but not in the brain.

Its subcellular location is the cytoplasm. It localises to the cytosol. The protein localises to the nucleus. The protein resides in the chromosome. It is found in the secreted. Its subcellular location is the extracellular space. It localises to the extracellular matrix. The protein localises to the cell membrane. The protein resides in the mitochondrion. The catalysed reaction is L-glutaminyl-[protein] + L-lysyl-[protein] = [protein]-L-lysyl-N(6)-5-L-glutamyl-[protein] + NH4(+). The enzyme catalyses L-glutaminyl-[protein] + serotonin = 5-serotonyl-L-glutamyl-[protein] + NH4(+). It carries out the reaction L-glutaminyl-[protein] + dopamine = 5-dopaminyl-L-glutamyl-[protein] + NH4(+). It catalyses the reaction L-glutaminyl-[protein] + histamine = 5-histaminyl-L-glutamyl-[protein] + NH4(+). The catalysed reaction is L-glutaminyl-[protein] + (R)-noradrenaline = 5-(R)-noradrenalinyl-L-glutamyl-[protein] + NH4(+). The enzyme catalyses L-glutaminyl-[protein] + H2O = L-glutamyl-[protein] + NH4(+). Acyltransferase activity is regulated by the binding of GTP and Ca(2+): inactivated by GTP, which stabilizes its closed structure, thereby obstructing the accessibility of substrates to the active sites. In contrast, Ca(2+) acts as a cofactor by inducing conformational change to the active open form. In absence of Ca(2+), Mg(2+) may bind Ca(2+)-binding sites, promoting GTP-binding and subsequent inhibition of the acyltransferase activity. Extracellularly reduced and activated by CLIC3. Functionally, calcium-dependent acyltransferase that catalyzes the formation of covalent bonds between peptide-bound glutamine and various primary amines, such as gamma-amino group of peptide-bound lysine, or mono- and polyamines, thereby producing cross-linked or aminated proteins, respectively. Involved in many biological processes, such as bone development, angiogenesis, wound healing, cellular differentiation, chromatin modification and apoptosis. Acts as a protein-glutamine gamma-glutamyltransferase by mediating the cross-linking of proteins, such as ACO2, HSPB6, FN1, HMGB1, RAP1GDS1, SLC25A4/ANT1, SPP1 and WDR54. Under physiological conditions, the protein cross-linking activity is inhibited by GTP; inhibition is relieved by Ca(2+) in response to various stresses. When secreted, catalyzes cross-linking of proteins of the extracellular matrix, such as FN1 and SPP1 resulting in the formation of scaffolds. Plays a key role during apoptosis, both by (1) promoting the cross-linking of cytoskeletal proteins resulting in condensation of the cytoplasm, and by (2) mediating cross-linking proteins of the extracellular matrix, resulting in the irreversible formation of scaffolds that stabilize the integrity of the dying cells before their clearance by phagocytosis, thereby preventing the leakage of harmful intracellular components. In addition to protein cross-linking, can use different monoamine substrates to catalyze a vast array of protein post-translational modifications: mediates aminylation of serotonin, dopamine, noradrenaline or histamine into glutamine residues of target proteins to generate protein serotonylation, dopaminylation, noradrenalinylation or histaminylation, respectively. Mediates protein serotonylation of small GTPases during activation and aggregation of platelets, leading to constitutive activation of these GTPases. Plays a key role in chromatin organization by mediating serotonylation and dopaminylation of histone H3. Catalyzes serotonylation of 'Gln-5' of histone H3 (H3Q5ser) during serotonergic neuron differentiation, thereby facilitating transcription. Acts as a mediator of neurotransmission-independent role of nuclear dopamine in ventral tegmental area (VTA) neurons: catalyzes dopaminylation of 'Gln-5' of histone H3 (H3Q5dop), thereby regulating relapse-related transcriptional plasticity in the reward system. Regulates vein remodeling by mediating serotonylation and subsequent inactivation of ATP2A2/SERCA2. Also acts as a protein deamidase by mediating the side chain deamidation of specific glutamine residues of proteins to glutamate. Catalyzes specific deamidation of protein gliadin, a component of wheat gluten in the diet. May also act as an isopeptidase cleaving the previously formed cross-links. Also able to participate in signaling pathways independently of its acyltransferase activity: acts as a signal transducer in alpha-1 adrenergic receptor-mediated stimulation of phospholipase C-delta (PLCD) activity and is required for coupling alpha-1 adrenergic agonists to the stimulation of phosphoinositide lipid metabolism. This is Protein-glutamine gamma-glutamyltransferase 2 from Bos taurus (Bovine).